The following is a 147-amino-acid chain: uncharacterized protein (147 aa).

A helical transmembrane segment spans residues 3–23 (APMIGMVVLVVVLGLAVLALS).

It to M.leprae ML1147.

Its subcellular location is the membrane. This is an uncharacterized protein from Mycobacterium tuberculosis (strain CDC 1551 / Oshkosh).